The sequence spans 692 residues: Elongation factor G (692 aa).

Residues 8 to 283 (EMTRNIGIMA…AVLDYMPAPT (276 aa)) form the tr-type G domain. GTP contacts are provided by residues 17–24 (AHIDAGKT), 81–85 (DTPGH), and 135–138 (NKMD).

The protein belongs to the TRAFAC class translation factor GTPase superfamily. Classic translation factor GTPase family. EF-G/EF-2 subfamily.

Its subcellular location is the cytoplasm. In terms of biological role, catalyzes the GTP-dependent ribosomal translocation step during translation elongation. During this step, the ribosome changes from the pre-translocational (PRE) to the post-translocational (POST) state as the newly formed A-site-bound peptidyl-tRNA and P-site-bound deacylated tRNA move to the P and E sites, respectively. Catalyzes the coordinated movement of the two tRNA molecules, the mRNA and conformational changes in the ribosome. This Citrifermentans bemidjiense (strain ATCC BAA-1014 / DSM 16622 / JCM 12645 / Bem) (Geobacter bemidjiensis) protein is Elongation factor G.